We begin with the raw amino-acid sequence, 403 residues long: Exodeoxyribonuclease 7 large subunit (403 aa).

This sequence belongs to the XseA family. In terms of assembly, heterooligomer composed of large and small subunits.

It is found in the cytoplasm. It catalyses the reaction Exonucleolytic cleavage in either 5'- to 3'- or 3'- to 5'-direction to yield nucleoside 5'-phosphates.. In terms of biological role, bidirectionally degrades single-stranded DNA into large acid-insoluble oligonucleotides, which are then degraded further into small acid-soluble oligonucleotides. The polypeptide is Exodeoxyribonuclease 7 large subunit (Clostridium botulinum (strain Okra / Type B1)).